A 70-amino-acid chain; its full sequence is Melittin (70 aa).

The signal sequence occupies residues 1–21 (MKFLVNVALVFMVVYISFIYA). The propeptide at 22 to 43 (APEPEPAPEAEAEADAEADPEA) is removed by a dipeptidylpeptidase. Residue Gly-44 is modified to N-formylglycine; partial. Gln-69 is subject to Glutamine amide.

This sequence belongs to the melittin family. As to quaternary structure, monomer (in solution and for integration into membranes), homotetramer (in solution and potentially as a toroidal pore in membranes), and potenially homomultimer (as a toroidal pore in membranes). In terms of tissue distribution, expressed by the venom gland.

Its subcellular location is the secreted. It localises to the target cell membrane. In terms of biological role, main toxin of bee venom with strong hemolytic activity and antimicrobial activity. It has enhancing effects on bee venom phospholipase A2 activity. This amphipathic toxin binds to negatively charged membrane surface and forms pore by inserting into lipid bilayers inducing the leakage of ions and molecules and the enhancement of permeability that ultimately leads to cell lysis. It acts as a voltage-gated pore with higher selectivity for anions over cations. The ion conductance has been shown to be voltage-dependent. Self-association of melittin in membranes is promoted by high ionic strength, but not by the presence of negatively charged lipids. In vivo, intradermal injection into healthy human volunteers produce sharp pain sensation and an inflammatory response. It produces pain by activating primary nociceptor cells directly and indirectly due to its ability to activate plasma membrane phospholipase A2 and its pore-forming activity. The chain is Melittin (MELT) from Polistes hebraeus (Paper wasp).